The chain runs to 898 residues: Coiled-coil domain-containing protein 186 (898 aa).

Disordered regions lie at residues 1–43 (MSET…NESK), 68–95 (NYIP…QIAN), and 702–749 (RRKL…SSVA). Position 2 is an N-acetylserine (Ser-2). Polar residues predominate over residues 82 to 95 (KTDTGSENSEQIAN). Residues 201-712 (KYLQQEHIIK…RKLDQVESGS (512 aa)) adopt a coiled-coil conformation. Over residues 703 to 717 (RKLDQVESGSYDKEV) the composition is skewed to basic and acidic residues. The span at 718–734 (SSMGSRSSSSGSLNARS) shows a compositional bias: low complexity. Phosphoserine is present on Ser-740. Coiled-coil stretches lie at residues 759–803 (AMLI…IQSY) and 855–894 (KLQA…LEQR).

In Homo sapiens (Human), this protein is Coiled-coil domain-containing protein 186 (CCDC186).